A 305-amino-acid chain; its full sequence is Probable DNA-invertase y4cG (305 aa).

Positions 15–148 (RLIGYARVST…SGMQAAKARG (134 aa)) constitute a Resolvase/invertase-type recombinase catalytic domain. The O-(5'-phospho-DNA)-serine intermediate role is filled by serine 23.

The protein belongs to the site-specific recombinase resolvase family.

The protein is Probable DNA-invertase y4cG of Sinorhizobium fredii (strain NBRC 101917 / NGR234).